A 158-amino-acid chain; its full sequence is Disulfide bond formation protein B (158 aa).

At 1 to 7 the chain is on the cytoplasmic side; that stretch reads MKNSRPV. A helical membrane pass occupies residues 8 to 24; it reads LFAVALASLLLLAVALY. The Periplasmic portion of the chain corresponds to 25 to 42; it reads LQHVENMLPCPLCVIQRY. A disulfide bond links Cys34 and Cys37. Residues 43–57 form a helical membrane-spanning segment; it reads AFAAIALICLVTAFR. The Cytoplasmic segment spans residues 58–63; sequence TEVTAR. A helical membrane pass occupies residues 64–81; it reads IGAALAALASLAGAGVAG. The Periplasmic segment spans residues 82–136; it reads WHIYIKAHPTVSCGIDPLETSLNTIPTAKLLPFLLQADGLCTTEYAPIMGLSIPQ. A disulfide bridge connects residues Cys94 and Cys122. Residues 137-155 form a helical membrane-spanning segment; that stretch reads WALVWFIVIALFLLHTAFR. At 156–158 the chain is on the cytoplasmic side; it reads KKS.

The protein belongs to the DsbB family.

The protein resides in the cell inner membrane. Its function is as follows. Required for disulfide bond formation in some periplasmic proteins. Acts by oxidizing the DsbA protein. The protein is Disulfide bond formation protein B of Herminiimonas arsenicoxydans.